Consider the following 379-residue polypeptide: Succinyl-diaminopimelate desuccinylase (379 aa).

A Zn(2+)-binding site is contributed by His-70. Asp-72 is an active-site residue. Asp-103 is a Zn(2+) binding site. Glu-137 acts as the Proton acceptor in catalysis. Zn(2+)-binding residues include Glu-138, Glu-166, and His-352.

Belongs to the peptidase M20A family. DapE subfamily. In terms of assembly, homodimer. Requires Zn(2+) as cofactor. Co(2+) is required as a cofactor.

It carries out the reaction N-succinyl-(2S,6S)-2,6-diaminopimelate + H2O = (2S,6S)-2,6-diaminopimelate + succinate. The protein operates within amino-acid biosynthesis; L-lysine biosynthesis via DAP pathway; LL-2,6-diaminopimelate from (S)-tetrahydrodipicolinate (succinylase route): step 3/3. In terms of biological role, catalyzes the hydrolysis of N-succinyl-L,L-diaminopimelic acid (SDAP), forming succinate and LL-2,6-diaminopimelate (DAP), an intermediate involved in the bacterial biosynthesis of lysine and meso-diaminopimelic acid, an essential component of bacterial cell walls. This Burkholderia multivorans (strain ATCC 17616 / 249) protein is Succinyl-diaminopimelate desuccinylase.